Reading from the N-terminus, the 102-residue chain is Parathymosin (102 aa).

Residues 1–102 are disordered; sequence MSEKSVEAAA…RQKTENGASA (102 aa). An N-acetylserine modification is found at Ser2. Phosphoserine is present on Ser2. Lys4 is subject to N6-acetyllysine. 2 positions are modified to phosphoserine: Ser5 and Ser13. Over residues 13-37 the composition is skewed to basic and acidic residues; sequence SAKDLKEKKDKVEEKAGRKERKKEV. The residue at position 15 (Lys15) is an N6-acetyllysine. Residues 38-75 are compositionally biased toward acidic residues; it reads VEEEENGAEEEEEETAEDGEDDDEGDEEDEEEEEEEDE. Thr52 bears the Phosphothreonine mark. Lys92 is modified (N6-acetyllysine).

It belongs to the pro/parathymosin family.

Its function is as follows. Parathymosin may mediate immune function by blocking the effect of prothymosin alpha which confers resistance to certain opportunistic infections. In Rattus norvegicus (Rat), this protein is Parathymosin (Ptms).